Reading from the N-terminus, the 378-residue chain is Inner membrane protein YibH (378 aa).

The Periplasmic segment spans residues 1-3 (MDL). The helical transmembrane segment at 4 to 24 (LIVLTYVALAWAVFKIFRIPV) threads the bilayer. Residues 25-26 (NQ) are Cytoplasmic-facing. The chain crosses the membrane as a helical span at residues 27-47 (WTLATAALGGVFLVSGLILLM). Over 48-54 (NYNHPYT) the chain is Periplasmic. A helical transmembrane segment spans residues 55 to 75 (FTAQKAVIAIPITPQVTGIVT). At 76 to 232 (EVTDKNNQLI…RAPSNGYVTQ (157 aa)) the chain is on the cytoplasmic side. Residues 233 to 253 (VLIRPGTYAAALPLRPVMVFI) form a helical membrane-spanning segment. Over 254–280 (PEQKRQIVAQFRQNSLLRLKPGDDAEV) the chain is Periplasmic. The chain crosses the membrane as a helical span at residues 281 to 301 (VFNALPGQVFHGKLTSILPVV). The Cytoplasmic portion of the chain corresponds to 302 to 309 (PGGSYQAQ). A helical transmembrane segment spans residues 310–330 (GVLQSLTVVPGTDGVLGTIEL). At 331–378 (DPNDDIDALPDGIYAQVAVYSDHFSHVSVMRKVLLRMTSWMHYLYLDH) the chain is on the periplasmic side.

Belongs to the membrane fusion protein (MFP) (TC 8.A.1) family.

The protein localises to the cell inner membrane. The protein is Inner membrane protein YibH (yibH) of Escherichia coli O157:H7.